A 360-amino-acid chain; its full sequence is Protein Wnt-2 (360 aa).

Positions 1–37 are cleaved as a signal peptide; sequence MIPRRSCWLILLLNLLNVQSLLDASWWSTVAQLSTAL. 11 disulfides stabilise this stretch: C80-C91, C130-C138, C140-C158, C213-C227, C215-C222, C289-C320, C305-C315, C319-C359, C335-C350, C337-C347, and C342-C343. N-linked (GlcNAc...) asparagine glycosylation is present at N90. S219 carries the O-palmitoleoyl serine; by mom-1 lipid modification. N352 carries an N-linked (GlcNAc...) asparagine glycan.

The protein belongs to the Wnt family. Post-translationally, palmitoleoylation is required for efficient binding to frizzled receptors. Depalmitoleoylation leads to Wnt signaling pathway inhibition. As to expression, expressed in intestine, pharynx, anterior body wall muscle, vulva, some pharyngeal neurons and SMD head neurons. Expressed along the boundary between the intestine and muscle or hypodermis, but is also expressed in the hypodermis in cells including seam cells.

Its subcellular location is the secreted. The protein localises to the extracellular space. It localises to the extracellular matrix. Its function is as follows. Ligand for members of the frizzled family of seven transmembrane receptors. Probable developmental protein. May be a signaling molecule which affects the development of discrete regions of tissues. Is likely to signal over only few cell diameters. Involved in the correct positioning of the developing nerve ring and in axon guidance of SIA and SIB neurons, probably by binding to tyrosine kinase receptor cam-1. In addition, regulates the positioning of some head neuronal cells, muscle arms associated with the nerve ring and the excretory pore. Together with Wnt ligand cwn-1, regulates the migration of CAN, ALM, BDU and HSN neurons during embryogenesis, the migration of QL and QR neuroblast descendants during larval development, and polarity of ALM neurons. May act through the wnt receptor cfz-2 to regulate QR neuroblast descendant migration, and to direct ALM migration. Also plays a role in axon growth and guidance in HSN and male CP neurons. In addition, together with wnt ligand cwn-1, negatively regulates developmental neurite pruning of AIM neurons probably by acting as a ligand for receptor tyrosine kinase cam-1. Through the cam-1 receptor also probably regulates the outgrowth of neurites from RME GABAergic motor neurons. May act redundantly with other Wnt ligands such as cwn-1 and mom-2 to control seam cell polarity. The protein is Protein Wnt-2 of Caenorhabditis elegans.